We begin with the raw amino-acid sequence, 632 residues long: Sporulenol synthase (632 aa).

Residue Asp-377 is the Proton donor of the active site. PFTB repeat units lie at residues 395 to 436 (WERG…EDAA), 465 to 505 (IQRA…HACG), and 513 to 554 (IQKA…VQTA).

Belongs to the terpene cyclase/mutase family.

The protein localises to the cell membrane. It catalyses the reaction sporulenol = (R)-tetraprenyl-beta-curcumene + H2O. It functions in the pathway secondary metabolite biosynthesis; hopanoid biosynthesis. Catalyzes the cyclization of tetraprenyl beta-curcumene into sporulenol. The sequence is that of Sporulenol synthase (sqhC) from Bacillus subtilis (strain 168).